We begin with the raw amino-acid sequence, 393 residues long: MKLSAALLAIAAFANVASAQDCDTPATVSGYSNSALPDPFTFNDGSPVTTAEDWECRRSQILALIQGYESGAAPPEPESVTGTASGNSLSVQVSYGGKSITFNNSITYPSGTAPAEGWPVIIAYEFPSLPIPSNVATLSFQNSAMGKQDSTSSRGQGLFYDLYGSSSNASAMTAWAWGVSRIIDAIESTPDAKLNPAAVGVTGCSRNGKGALMAGALEPRVALTLPQESGSGGDACWRLSRYEEQQGSQVQTATEIVGENCWFSAGFDQYVNNLDSLPYDHHLLAALVAPRGLISYANTDYVWLSGMSSFGCMTAAHAVYEALGVPENHGFEQVGGHSHCQWPSQLDGSLNAFINKFLLGQDVSTDYFESNNQFNGVTWSESQWINWETPTLN.

The N-terminal stretch at 1–19 is a signal peptide; the sequence is MKLSAALLAIAAFANVASA. Pyrrolidone carboxylic acid is present on Q20. C22 and C56 are joined by a disulfide. N-linked (GlcNAc...) asparagine glycans are attached at residues N103 and N168. Residues 203–208 carry the GXSYXG catalytic site motif motif; that stretch reads GCSRNG. Disulfide bonds link C204-C340 and C236-C312. S205 functions as the Nucleophile in the catalytic mechanism. Substrate is bound by residues K209, Q251, E259, and W303. The active-site Proton donor/acceptor is the H339.

The protein belongs to the carbohydrate esterase 15 (CE15) family.

The protein localises to the secreted. The catalysed reaction is a 4-O-methyl-alpha-D-glucuronosyl ester derivative + H2O = 4-O-methyl-alpha-D-glucuronate derivative + an alcohol + H(+). Its function is as follows. Glucuronoyl esterase which may play a significant role in biomass degradation, as it is considered to disconnect hemicellulose from lignin through the hydrolysis of the ester bond between 4-O-methyl-D-glucuronic acid residues of glucuronoxylans and aromatic alcohols of lignin. The polypeptide is 4-O-methyl-glucuronoyl methylesterase (Schizophyllum commune (strain H4-8 / FGSC 9210) (Split gill fungus)).